Here is a 513-residue protein sequence, read N- to C-terminus: ATP synthase subunit alpha (513 aa).

ATP is bound at residue 169–176 (GDRQCGKT).

It belongs to the ATPase alpha/beta chains family. As to quaternary structure, F-type ATPases have 2 components, CF(1) - the catalytic core - and CF(0) - the membrane proton channel. CF(1) has five subunits: alpha(3), beta(3), gamma(1), delta(1), epsilon(1). CF(0) has three main subunits: a(1), b(2) and c(9-12). The alpha and beta chains form an alternating ring which encloses part of the gamma chain. CF(1) is attached to CF(0) by a central stalk formed by the gamma and epsilon chains, while a peripheral stalk is formed by the delta and b chains.

The protein localises to the cell inner membrane. It catalyses the reaction ATP + H2O + 4 H(+)(in) = ADP + phosphate + 5 H(+)(out). In terms of biological role, produces ATP from ADP in the presence of a proton gradient across the membrane. The alpha chain is a regulatory subunit. The sequence is that of ATP synthase subunit alpha from Alteromonas mediterranea (strain DSM 17117 / CIP 110805 / LMG 28347 / Deep ecotype).